The following is a 350-amino-acid chain: Sperm equatorial segment protein 1 (350 aa).

The first 19 residues, methionine 1 to alanine 19, serve as a signal peptide directing secretion. Asparagine 128 carries N-linked (GlcNAc...) asparagine glycosylation.

The protein belongs to the SPESP1 family. Post-translationally, glycosylated. In testis there are two predominant forms of 77- and 67-kDa and a form of 47-kDa, whereas in epididymal sperm from caput, corpus, and cauda there are two forms of 47- and 43-kDa. Testis forms contain complex carbohydrate residues. Epididymal sperm forms are N-glycosylated. Then undergoes significant glycosylation in the testis and that the majority of these glycoconjugates are removed by the time sperm reach the caput epididymis. In terms of tissue distribution, highly expressed in testis, where it is localized in the acrosome of postmeiotic stages of spermiogenesis (round and elongating spermatids and in ejaculated spermatozoa) (at protein level). Poorly expressed in placenta and fetal lung.

The protein localises to the cytoplasmic vesicle. It localises to the secretory vesicle. Its subcellular location is the acrosome. Its function is as follows. Involved in fertilization ability of sperm. This Homo sapiens (Human) protein is Sperm equatorial segment protein 1.